Reading from the N-terminus, the 1463-residue chain is DNA polymerase III PolC-type (1463 aa).

In terms of domain architecture, Exonuclease spans 425-581; that stretch reads YVVFDVETTG…YDAEATGRLL (157 aa).

The protein belongs to the DNA polymerase type-C family. PolC subfamily.

It localises to the cytoplasm. The enzyme catalyses DNA(n) + a 2'-deoxyribonucleoside 5'-triphosphate = DNA(n+1) + diphosphate. In terms of biological role, required for replicative DNA synthesis. This DNA polymerase also exhibits 3' to 5' exonuclease activity. The polypeptide is DNA polymerase III PolC-type (Streptococcus pneumoniae serotype 4 (strain ATCC BAA-334 / TIGR4)).